The following is a 715-amino-acid chain: Protein psiH (715 aa).

The signal sequence occupies residues 1 to 20 (MNYLKPTIFLILCLVTFVYS). Residues 21–651 (QPSTLTIQGT…ICKTGAVVST (631 aa)) lie on the Extracellular side of the membrane. Residues 115 to 256 (NYDSKKQVYV…YDYCGVCSGD (142 aa)) form the PA14 domain. N149, N377, N528, and N622 each carry an N-linked (GlcNAc...) asparagine glycan. The chain crosses the membrane as a helical span at residues 652-672 (AVIAGVTVAGAVALGVFIYGG). Residues 673–715 (KRGYDYWKESRNVQFSGSNSNPLYEQNPNGSGVNPLYNDNSAL) are Cytoplasmic-facing. The disordered stretch occupies residues 690–715 (SNSNPLYEQNPNGSGVNPLYNDNSAL).

The protein belongs to the prespore-cell-inducing factor family.

It is found in the membrane. The polypeptide is Protein psiH (psiH) (Dictyostelium discoideum (Social amoeba)).